Consider the following 139-residue polypeptide: Translation initiation factor 5A (139 aa).

Lysine 36 carries the post-translational modification Hypusine.

It belongs to the eIF-5A family.

It is found in the cytoplasm. In terms of biological role, functions by promoting the formation of the first peptide bond. This Aeropyrum pernix (strain ATCC 700893 / DSM 11879 / JCM 9820 / NBRC 100138 / K1) protein is Translation initiation factor 5A (eif5a).